A 1500-amino-acid chain; its full sequence is ABC transporter G family member 42 (1500 aa).

Positions 26–56 (VDEAFMPQNSGGGGGSRGRRRSGRGGTADDD) are disordered. In terms of domain architecture, ABC transporter 1 spans 182 to 455 (LGLVGVRPGR…FESCGFRCPE (274 aa)). An ATP-binding site is contributed by 215-222 (GPPSSGKT). The region spanning 533-746 (ELLKASFAKE…GYNALAVNEF (214 aa)) is the ABC transmembrane type-2 1 domain. Helical transmembrane passes span 551–571 (FVYI…STVF), 584–604 (GFVY…NGFA), 639–659 (IPFS…TIGF), 670–690 (LLLV…TAGL), 695–715 (IIAQ…GGFL), 724–744 (WWIW…LAVN), and 783–803 (FWIG…LFTL). A compositionally biased stretch (basic and acidic residues) spans 822 to 834 (TAKEAEGNGDARH). Residues 822–850 (TAKEAEGNGDARHTVRNGSTKSNGGNHKE) form a disordered region. The span at 837-846 (RNGSTKSNGG) shows a compositional bias: polar residues. The ABC transporter 2 domain maps to 894–1151 (MSFDDVNYYV…KMIEYFEAIP (258 aa)). Position 939–946 (939–946 (GVSGAGKT)) interacts with ATP. Residues 1224–1438 (GQFRACLWKQ…TVYGLIVTQY (215 aa)) form the ABC transmembrane type-2 2 domain. The next 7 membrane-spanning stretches (helical) occupy residues 1245–1265 (LVRF…FWKI), 1277–1297 (MVIG…CATV), 1331–1351 (IPYV…MMSF), 1358–1378 (FFWF…YGMM), 1388–1408 (VAAI…GFFI), 1416–1436 (WWIW…LIVT), and 1472–1492 (VVAP…AICI).

It belongs to the ABC transporter superfamily. ABCG family. PDR (TC 3.A.1.205) subfamily.

It localises to the membrane. Its function is as follows. May be a general defense protein. This chain is ABC transporter G family member 42, found in Oryza sativa subsp. japonica (Rice).